The chain runs to 194 residues: ATP-dependent Clp protease proteolytic subunit (194 aa).

S98 (nucleophile) is an active-site residue. Residue H123 is part of the active site.

This sequence belongs to the peptidase S14 family. As to quaternary structure, fourteen ClpP subunits assemble into 2 heptameric rings which stack back to back to give a disk-like structure with a central cavity, resembling the structure of eukaryotic proteasomes.

Its subcellular location is the cytoplasm. It carries out the reaction Hydrolysis of proteins to small peptides in the presence of ATP and magnesium. alpha-casein is the usual test substrate. In the absence of ATP, only oligopeptides shorter than five residues are hydrolyzed (such as succinyl-Leu-Tyr-|-NHMec, and Leu-Tyr-Leu-|-Tyr-Trp, in which cleavage of the -Tyr-|-Leu- and -Tyr-|-Trp bonds also occurs).. Its function is as follows. Cleaves peptides in various proteins in a process that requires ATP hydrolysis. Has a chymotrypsin-like activity. Plays a major role in the degradation of misfolded proteins. In Clostridium botulinum (strain Hall / ATCC 3502 / NCTC 13319 / Type A), this protein is ATP-dependent Clp protease proteolytic subunit.